A 393-amino-acid chain; its full sequence is Messenger RNA-binding inhibitor of apoptosis 1 (393 aa).

The tract at residues 12-76 (ELYIPQKMKA…EKILRDVWRK (65 aa)) is KH 1-like. The KH 2-like stretch occupies residues 79–157 (VQIMIREAAL…MMIECLTEHF (79 aa)). Residues 259 to 322 (EKIKQWIPTT…NKEQCQEARN (64 aa)) are KH 3-like. Residues 328–393 (MQSHQDKPAS…LTPRKLSPSD (66 aa)) are disordered. Over residues 345 to 359 (STPGSPFTSDSSSTT) the composition is skewed to low complexity.

As to quaternary structure, may interact with wago-4. Expressed throughout the germline and in oocytes (at protein level).

It is found in the cytoplasm. Its subcellular location is the perinuclear region. RNA-binding protein which binds to its own mRNA and target mRNAs to negatively regulate gene expression to modulate apoptosis and differentiation in the germline. Negatively regulates the expression of the argonaute protein wago-4, and may thus play a role in RNA-mediated gene silencing (RNAi) in the germline. This Caenorhabditis elegans protein is Messenger RNA-binding inhibitor of apoptosis 1.